We begin with the raw amino-acid sequence, 334 residues long: Holliday junction branch migration complex subunit RuvB (334 aa).

The tract at residues 1–182 (MDERLVSSEA…FGVMSRLEYY (182 aa)) is large ATPase domain (RuvB-L). ATP is bound by residues Leu-21, Arg-22, Gly-63, Lys-66, Thr-67, Thr-68, 129–131 (EDF), Arg-172, Tyr-182, and Arg-219. Residue Thr-67 participates in Mg(2+) binding. Residues 183–253 (TQEELADIVT…ISQNALERLQ (71 aa)) form a small ATPAse domain (RuvB-S) region. The head domain (RuvB-H) stretch occupies residues 256–334 (RLGLDHIDHK…HFQMEAPRYD (79 aa)). DNA-binding residues include Arg-311 and Arg-316.

This sequence belongs to the RuvB family. As to quaternary structure, homohexamer. Forms an RuvA(8)-RuvB(12)-Holliday junction (HJ) complex. HJ DNA is sandwiched between 2 RuvA tetramers; dsDNA enters through RuvA and exits via RuvB. An RuvB hexamer assembles on each DNA strand where it exits the tetramer. Each RuvB hexamer is contacted by two RuvA subunits (via domain III) on 2 adjacent RuvB subunits; this complex drives branch migration. In the full resolvosome a probable DNA-RuvA(4)-RuvB(12)-RuvC(2) complex forms which resolves the HJ. Homohexamer which interacts with RecU.

The protein localises to the cytoplasm. The catalysed reaction is ATP + H2O = ADP + phosphate + H(+). Functionally, the RuvA-RuvB-RuvC complex processes Holliday junction (HJ) DNA during genetic recombination and DNA repair, while the RuvA-RuvB complex plays an important role in the rescue of blocked DNA replication forks via replication fork reversal (RFR). RuvA specifically binds to HJ cruciform DNA, conferring on it an open structure. The RuvB hexamer acts as an ATP-dependent pump, pulling dsDNA into and through the RuvAB complex. RuvB forms 2 homohexamers on either side of HJ DNA bound by 1 or 2 RuvA tetramers; 4 subunits per hexamer contact DNA at a time. Coordinated motions by a converter formed by DNA-disengaged RuvB subunits stimulates ATP hydrolysis and nucleotide exchange. Immobilization of the converter enables RuvB to convert the ATP-contained energy into a lever motion, pulling 2 nucleotides of DNA out of the RuvA tetramer per ATP hydrolyzed, thus driving DNA branch migration. The RuvB motors rotate together with the DNA substrate, which together with the progressing nucleotide cycle form the mechanistic basis for DNA recombination by continuous HJ branch migration. Branch migration allows RuvC to scan DNA until it finds its consensus sequence, where it cleaves and resolves cruciform DNA. This is Holliday junction branch migration complex subunit RuvB from Bacillus subtilis (strain 168).